Reading from the N-terminus, the 91-residue chain is Small ribosomal subunit protein uS19m (91 aa).

Belongs to the universal ribosomal protein uS19 family. In terms of assembly, component of the mitochondrial small ribosomal subunit (mt-SSU). Mature yeast 74S mitochondrial ribosomes consist of a small (37S) and a large (54S) subunit. The 37S small subunit contains a 15S ribosomal RNA (15S mt-rRNA) and 34 different proteins. The 54S large subunit contains a 21S rRNA (21S mt-rRNA) and 46 different proteins.

Its subcellular location is the mitochondrion. Its function is as follows. Component of the mitochondrial ribosome (mitoribosome), a dedicated translation machinery responsible for the synthesis of mitochondrial genome-encoded proteins, including at least some of the essential transmembrane subunits of the mitochondrial respiratory chain. The mitoribosomes are attached to the mitochondrial inner membrane and translation products are cotranslationally integrated into the membrane. In Saccharomyces cerevisiae (strain ATCC 204508 / S288c) (Baker's yeast), this protein is Small ribosomal subunit protein uS19m (RSM19).